Reading from the N-terminus, the 150-residue chain is Sulfur-rich protein, serovars L1/L3 (150 aa).

The tract at residues 1-20 (MSTVPVVQGAGSSNSAQDIS) is disordered. Helical transmembrane passes span 43–63 (VGLV…VSAA) and 69–89 (IYLA…ILSM).

Its subcellular location is the membrane. This is Sulfur-rich protein, serovars L1/L3 (srp) from Chlamydia trachomatis.